The following is a 179-amino-acid chain: Transcriptional repressor NrdR (179 aa).

Residues 3–34 (CPYCQHTNSRVLESRSSEGGQSIRRRRECLCC) fold into a zinc finger. The ATP-cone domain maps to 49–139 (ITVIKHDGKK…VYGRFQGIKD (91 aa)). The tract at residues 160–179 (KPANDDFSEQETPSTVMMPS) is disordered. A compositionally biased stretch (polar residues) spans 169 to 179 (QETPSTVMMPS).

The protein belongs to the NrdR family. Zn(2+) serves as cofactor.

Negatively regulates transcription of bacterial ribonucleotide reductase nrd genes and operons by binding to NrdR-boxes. This Rippkaea orientalis (strain PCC 8801 / RF-1) (Cyanothece sp. (strain PCC 8801)) protein is Transcriptional repressor NrdR.